We begin with the raw amino-acid sequence, 117 residues long: Large ribosomal subunit protein eL8 (117 aa).

The protein belongs to the eukaryotic ribosomal protein eL8 family. Part of the 50S ribosomal subunit. Probably part of the RNase P complex.

It localises to the cytoplasm. Its function is as follows. Multifunctional RNA-binding protein that recognizes the K-turn motif in ribosomal RNA, the RNA component of RNase P, box H/ACA, box C/D and box C'/D' sRNAs. This chain is Large ribosomal subunit protein eL8, found in Methanocaldococcus jannaschii (strain ATCC 43067 / DSM 2661 / JAL-1 / JCM 10045 / NBRC 100440) (Methanococcus jannaschii).